The sequence spans 378 residues: Mannitol-1-phosphate 5-dehydrogenase (378 aa).

Position 4 to 15 (4 to 15) interacts with NAD(+); sequence SVHFGAGNIGRG.

It belongs to the mannitol dehydrogenase family.

It carries out the reaction D-mannitol 1-phosphate + NAD(+) = beta-D-fructose 6-phosphate + NADH + H(+). The chain is Mannitol-1-phosphate 5-dehydrogenase from Streptococcus pneumoniae (strain ATCC 700669 / Spain 23F-1).